The primary structure comprises 430 residues: Rosmarinate synthase (430 aa).

His-152 functions as the Proton acceptor in the catalytic mechanism. The interval 178–210 is disordered; sequence TPLPHFDRSSLSARNPPQPQFSHAEYQPPPTLE. Residue Asp-377 is the Proton acceptor of the active site.

It belongs to the plant acyltransferase family.

The catalysed reaction is (2R)-3-(3,4-dihydroxyphenyl)lactate + (E)-caffeoyl-CoA = (R)-rosmarinate + CoA. Its function is as follows. Involved in the biosynthesis of rosmarinic acid, a compound with antiviral, antimicrobial and anti-inflammatory activities. Can use 4-coumaroyl- and caffeoyl-CoA as hydroxycinnamoyl donors and 4-Hydroxyphenyllactate and 3.4-Dihydroxyphenyllactate, but not shikimate or quinate, as hydroxycinnamoyl acceptors. Can also putatively catalyze amide formation with D-amino acids as acceptors. The chain is Rosmarinate synthase (RAS) from Plectranthus scutellarioides (Coleus).